The following is a 113-amino-acid chain: MNRQPMFFILIVLLFTVFSLKEFIPNTFCIHPKEGIIHLEKEHPKTFCEKDEVHVKVLSEIKNLKVQLDLDKSFSFTSPFRISLSFVVLKKQNALPEKSPRRESPIKTVRLLI.

A helical membrane pass occupies residues 7-29; sequence FFILIVLLFTVFSLKEFIPNTFC.

The protein localises to the membrane. This is an uncharacterized protein from Aquifex aeolicus (strain VF5).